The sequence spans 88 residues: Putative transposase InsN for insertion sequence element IS911B (88 aa).

It belongs to the transposase 8 family.

Functionally, involved in the transposition of the insertion sequence IS911. In Escherichia coli (strain K12), this protein is Putative transposase InsN for insertion sequence element IS911B (insN2).